A 351-amino-acid polypeptide reads, in one-letter code: MSSNSSQAPPNGTPGPFDGPQWPYQAPQSTYVGVAVLMGTVVACASVVNGLVIVVSICYKKLRSPLNYILVNLAVADLLVTLCGSSVSLSNNINGFFVFGRRMCELEGFMVSLTGIVGLWSLAILALERYVVVCKPLGDFQFQRRHAVSGCAFTWGWALLWSAPPLLGWSSYVPEGLRTSCGPNWYTGGSNNNSYILSLFVTCFVLPLSLILFSYTNLLLTLRAAAAQQKEADTTQRAEREVTRMVIVMVMAFLLCWLPYSTFALVVATHKGIIIQPVLASLPSYFSKTATVYNPIIYVFMNKQFQSCLLEMLCCGYQPQRTGKASPGTPGPHADVTAAGLRNKVMPAHPV.

The Extracellular segment spans residues 1 to 30 (MSSNSSQAPPNGTPGPFDGPQWPYQAPQST). N-linked (GlcNAc...) asparagine glycosylation occurs at Asn4. A helical membrane pass occupies residues 31–55 (YVGVAVLMGTVVACASVVNGLVIVV). Over 56-67 (SICYKKLRSPLN) the chain is Cytoplasmic. Residues 68–92 (YILVNLAVADLLVTLCGSSVSLSNN) traverse the membrane as a helical segment. Residues 93–107 (INGFFVFGRRMCELE) are Extracellular-facing. A disulfide bond links Cys104 and Cys181. Residues 108-127 (GFMVSLTGIVGLWSLAILAL) form a helical membrane-spanning segment. At 128 to 146 (ERYVVVCKPLGDFQFQRRH) the chain is on the cytoplasmic side. A helical transmembrane segment spans residues 147-170 (AVSGCAFTWGWALLWSAPPLLGWS). The Extracellular portion of the chain corresponds to 171-194 (SYVPEGLRTSCGPNWYTGGSNNNS). Asn192 is a glycosylation site (N-linked (GlcNAc...) asparagine). The chain crosses the membrane as a helical span at residues 195–222 (YILSLFVTCFVLPLSLILFSYTNLLLTL). The Cytoplasmic segment spans residues 223–244 (RAAAAQQKEADTTQRAEREVTR). Residues 245–268 (MVIVMVMAFLLCWLPYSTFALVVA) form a helical membrane-spanning segment. Residues 269-276 (THKGIIIQ) are Extracellular-facing. The helical transmembrane segment at 277-301 (PVLASLPSYFSKTATVYNPIIYVFM) threads the bilayer. Lys288 bears the N6-(retinylidene)lysine mark. Residues 302 to 351 (NKQFQSCLLEMLCCGYQPQRTGKASPGTPGPHADVTAAGLRNKVMPAHPV) lie on the Cytoplasmic side of the membrane. 2 S-palmitoyl cysteine lipidation sites follow: Cys314 and Cys315.

Belongs to the G-protein coupled receptor 1 family. Opsin subfamily. Post-translationally, phosphorylated on some or all of the serine and threonine residues present in the C-terminal region. As to expression, pineal gland.

It localises to the membrane. In terms of biological role, produces a slow and prolonged phototransduction response consistent with the non-visual function of pineal photoreception. The polypeptide is Pinopsin (Gallus gallus (Chicken)).